Consider the following 116-residue polypeptide: Somatostatin (116 aa).

An N-terminal signal peptide occupies residues 1–24 (MLSCRLQCALAALSIVLALGGVTG). The propeptide occupies 25–88 (APSDPRLRQF…QDEMRLELQR (64 aa)). A43 is modified (alanine amide). C105 and C116 are joined by a disulfide.

It belongs to the somatostatin family. C-terminal amidation of the neuronostatin peptide is required for its biological activity, including for the regulation of mean arterial pressure.

Its subcellular location is the secreted. Inhibits the secretion of pituitary hormones, including that of growth hormone/somatotropin (GH1), PRL, ACTH, luteinizing hormone (LH) and TSH. Also impairs ghrelin- and GnRH-stimulated secretion of GH1 and LH; the inhibition of ghrelin-stimulated secretion of GH1 can be further increased by neuronostatin. Its function is as follows. May enhance low-glucose-induced glucagon release by pancreatic alpha cells. This effect may be mediated by binding to GPR107 and PKA activation. May regulate cardiac contractile function. May compromise cardiomyocyte viability. In the central nervous system, may impair memory retention and may affect hippocampal excitability. May also have anxiolytic and anorexigenic effects. May play a role in arterial pressure regulation. May inhibit basal, but not ghrelin- or GnRH-stimulated secretion of GH1 or LH, but does not affect the release of other pituitary hormones, including PRL, ACTH, FSH or TSH. Potentiates inhibitory action of somatostatin on ghrelin-stimulated secretion of GH1, but not that on GnRH-stimulated secretion of LH. The polypeptide is Somatostatin (SST) (Bos taurus (Bovine)).